The following is a 301-amino-acid chain: MRTTLTHLQQLEAESIHIIREVVAEFANPVMLYSIGKDSAVMLHLARKAFYPAPPPFPLLHVDTTWKFRDMIQFRDRMAAECGFDLIVHVNKEGVEQGISPFTHGSALYTDIMKTEGLKQALDKYRFDAAFGGARRDEEKSRAKERIFSFRSANHRWDPKNQRPELWNLYNTRIKQGESIRVFPLSNWTELDVWQYIHLENIPIVPLYYAAVRPVVERDGMLIMVDDERLELKPGETVQHKSVRFRTLGCYPLTGAVESTADTLPKIIQEMLLTRTSERQGRLIDHDQAGSMEKKKQEGYF.

Belongs to the PAPS reductase family. CysD subfamily. In terms of assembly, heterodimer composed of CysD, the smaller subunit, and CysN.

The enzyme catalyses sulfate + ATP + H(+) = adenosine 5'-phosphosulfate + diphosphate. Its pathway is sulfur metabolism; hydrogen sulfide biosynthesis; sulfite from sulfate: step 1/3. In terms of biological role, with CysN forms the ATP sulfurylase (ATPS) that catalyzes the adenylation of sulfate producing adenosine 5'-phosphosulfate (APS) and diphosphate, the first enzymatic step in sulfur assimilation pathway. APS synthesis involves the formation of a high-energy phosphoric-sulfuric acid anhydride bond driven by GTP hydrolysis by CysN coupled to ATP hydrolysis by CysD. The protein is Sulfate adenylyltransferase subunit 2 of Geobacter metallireducens (strain ATCC 53774 / DSM 7210 / GS-15).